We begin with the raw amino-acid sequence, 379 residues long: uncharacterized protein (379 aa).

The protein belongs to the mimivirus L17x/L18x family.

This is an uncharacterized protein from Acanthamoeba polyphaga mimivirus (APMV).